Reading from the N-terminus, the 123-residue chain is Small ribosomal subunit protein uS12 (123 aa).

Residues 1 to 28 (MPTIQQLIRTERSKVQKKTKSPALKQCP) form a disordered region. Aspartate 89 is subject to 3-methylthioaspartic acid. The tract at residues 104–123 (ATGVKDRKQGRSKYGTKRPK) is disordered. Basic residues predominate over residues 113-123 (GRSKYGTKRPK).

This sequence belongs to the universal ribosomal protein uS12 family. In terms of assembly, part of the 30S ribosomal subunit. Contacts proteins S8 and S17. May interact with IF1 in the 30S initiation complex.

Its function is as follows. With S4 and S5 plays an important role in translational accuracy. In terms of biological role, interacts with and stabilizes bases of the 16S rRNA that are involved in tRNA selection in the A site and with the mRNA backbone. Located at the interface of the 30S and 50S subunits, it traverses the body of the 30S subunit contacting proteins on the other side and probably holding the rRNA structure together. The combined cluster of proteins S8, S12 and S17 appears to hold together the shoulder and platform of the 30S subunit. This Gloeothece citriformis (strain PCC 7424) (Cyanothece sp. (strain PCC 7424)) protein is Small ribosomal subunit protein uS12.